We begin with the raw amino-acid sequence, 530 residues long: MAAIKAVNSKAEVARARAALAVNICAARGLQDVLRTNLGPKGTMKMLVSGAGDIKLTKDGNVLLDEMQIQHPTASLIAKVATAQDDVTGDGTTSNVLIIGELLKQADLYISEGLHPRIIAEGFEAAKIKALEVLEEVKVTKEMKRKILLDVARTSLQTKVHAELADVLTEVVVDSVLAVRRPGYPIDLFMVEIMEMKHKLGTDTKLIQGLVLDHGARHPDMKKRVEDAFILICNVSLEYEKTEVNSGFFYKTAEEKEKLVKAERKFIEDRVQKIIDLKDKVCAQSNKGFVVINQKGIDPFSLDSLAKHGIVALRRAKRRNMERLSLACGGMAVNSFEDLTVDCLGHAGLVYEYTLGEEKFTFIEECVNPCSVTLLVKGPNKHTLTQVKDAIRDGLRAIKNAIEDGCMVPGAGAIEVAMAEALVTYKNSIKGRARLGVQAFADALLIIPKVLAQNAGYDPQETLVKVQAEHVESKQLVGVDLNTGEPMVAADAGVWDNYCVKKQLLHSCTVIATNILLVDEIMRAGMSSLK.

This sequence belongs to the TCP-1 chaperonin family. As to quaternary structure, component of the chaperonin-containing T-complex (TRiC), a heterooligomeric complex of about 850 to 900 kDa that forms two stacked rings, 12 to 16 nm in diameter. Testis-specific.

It is found in the cytoplasm. Functionally, component of the chaperonin-containing T-complex (TRiC), a molecular chaperone complex that assists the folding of proteins upon ATP hydrolysis. In Homo sapiens (Human), this protein is T-complex protein 1 subunit zeta-2 (CCT6B).